A 150-amino-acid chain; its full sequence is 3-hydroxyacyl-[acyl-carrier-protein] dehydratase FabZ (150 aa).

The active site involves histidine 51.

Belongs to the thioester dehydratase family. FabZ subfamily.

The protein resides in the cytoplasm. The enzyme catalyses a (3R)-hydroxyacyl-[ACP] = a (2E)-enoyl-[ACP] + H2O. Its function is as follows. Involved in unsaturated fatty acids biosynthesis. Catalyzes the dehydration of short chain beta-hydroxyacyl-ACPs and long chain saturated and unsaturated beta-hydroxyacyl-ACPs. The protein is 3-hydroxyacyl-[acyl-carrier-protein] dehydratase FabZ of Geobacter metallireducens (strain ATCC 53774 / DSM 7210 / GS-15).